Here is a 160-residue protein sequence, read N- to C-terminus: Ureidoglycolate lyase (160 aa).

It belongs to the ureidoglycolate lyase family. As to quaternary structure, homodimer. The cofactor is Ni(2+).

It catalyses the reaction (S)-ureidoglycolate = urea + glyoxylate. It functions in the pathway nitrogen metabolism; (S)-allantoin degradation. Its function is as follows. Catalyzes the catabolism of the allantoin degradation intermediate (S)-ureidoglycolate, generating urea and glyoxylate. Involved in the utilization of allantoin as nitrogen source. The polypeptide is Ureidoglycolate lyase (Salmonella agona (strain SL483)).